The sequence spans 312 residues: sn-1-specific diacylglycerol lipase ABHD11 (312 aa).

Residues 1 to 14 constitute a mitochondrion transit peptide; it reads MITFKSFHCSRGWH. In terms of domain architecture, AB hydrolase-1 spans 62 to 297; it reads PPLVLLHGLF…GAGHWVHADK (236 aa). Active-site charge relay system residues include Ser-136, Glu-232, and His-291.

Belongs to the AB hydrolase superfamily. In terms of processing, phosphorylated.

It localises to the mitochondrion. The protein resides in the mitochondrion matrix. The enzyme catalyses 1-octadecanoyl-2-(5Z,8Z,11Z,14Z-eicosatetraenoyl)-sn-glycerol + H2O = 2-(5Z,8Z,11Z,14Z-eicosatetraenoyl)-glycerol + octadecanoate + H(+). The catalysed reaction is a 1,2-diacyl-sn-glycerol + H2O = a 2-acylglycerol + a fatty acid + H(+). It catalyses the reaction a 1,3-diacyl-sn-glycerol + H2O = a 1-acyl-sn-glycerol + a fatty acid + H(+). It carries out the reaction 1-octadecanoyl-2-(9Z-octadecenoyl)-sn-glycerol + H2O = 2-(9Z-octadecenoyl)-glycerol + octadecanoate + H(+). The enzyme catalyses 1-octadecanoyl-2-(4Z,7Z,10Z,13Z,16Z,19Z-docosahexaenoyl)-sn-glycerol + H2O = 2-(4Z,7Z,10Z,13Z,16Z,19Z-docosahexaenoyl)-glycerol + octadecanoate + H(+). The catalysed reaction is 1,2-didecanoylglycerol + H2O = decanoylglycerol + decanoate + H(+). Functionally, catalyzes the hydrolysis of diacylglycerol in vitro and may function as a key regulator in lipid metabolism, namely by regulating the intracellular levels of diacylglycerol. 1,2-diacyl-sn-glycerols are the preferred substrate over 1,3-diacyl-sn-glycerols. The enzyme hydrolyzes stearate in preference to palmitate from the sn-1 position of 1,2-diacyl-sn-glycerols. The protein is sn-1-specific diacylglycerol lipase ABHD11 of Xenopus laevis (African clawed frog).